The primary structure comprises 396 residues: Phosphoglycerate kinase (396 aa).

Substrate contacts are provided by residues 21-23 (DIN), Arg-36, 59-62 (HFGR), Arg-114, and Arg-147. Residues Lys-197, Glu-319, and 349–352 (GGDT) each bind ATP.

The protein belongs to the phosphoglycerate kinase family. In terms of assembly, monomer.

Its subcellular location is the cytoplasm. It catalyses the reaction (2R)-3-phosphoglycerate + ATP = (2R)-3-phospho-glyceroyl phosphate + ADP. It participates in carbohydrate degradation; glycolysis; pyruvate from D-glyceraldehyde 3-phosphate: step 2/5. This Jannaschia sp. (strain CCS1) protein is Phosphoglycerate kinase.